Here is a 767-residue protein sequence, read N- to C-terminus: DNA topoisomerase 1 (767 aa).

Residues 1 to 23 are compositionally biased toward basic and acidic residues; it reads MSGDHLHNDSQIEADFRLNDSHK. Residues 1-201 are disordered; it reads MSGDHLHNDS…NKKKKPKKEE (201 aa). Position 2 is an N-acetylserine (S2). S2 and S10 each carry phosphoserine. Residues 24–39 are compositionally biased toward basic residues; sequence HKDKHKDREHRHKEHK. Positions 40–110 are enriched in basic and acidic residues; that stretch reads KDKDKDREKS…DAKIKKEKEN (71 aa). Position 59 is a phosphoserine (S59). A Glycyl lysine isopeptide (Lys-Gly) (interchain with G-Cter in SUMO2) cross-link involves residue K103. A Glycyl lysine isopeptide (Lys-Gly) (interchain with G-Cter in SUMO); alternate cross-link involves residue K105. K105 participates in a covalent cross-link: Glycyl lysine isopeptide (Lys-Gly) (interchain with G-Cter in SUMO2); alternate. Phosphoserine is present on S114. K119 is covalently cross-linked (Glycyl lysine isopeptide (Lys-Gly) (interchain with G-Cter in SUMO); alternate). K119 is covalently cross-linked (Glycyl lysine isopeptide (Lys-Gly) (interchain with G-Cter in SUMO2); alternate). Residue K119 forms a Glycyl lysine isopeptide (Lys-Gly) (interchain with G-Cter in SUMO1); alternate linkage. Residues 131–168 show a composition bias toward basic and acidic residues; it reads PKEDIKPLKRLRDEDDADYKPKKIKTEDIKKEKKRKSE. Glycyl lysine isopeptide (Lys-Gly) (interchain with G-Cter in SUMO2) cross-links involve residues K136 and K150. K155 is covalently cross-linked (Glycyl lysine isopeptide (Lys-Gly) (interchain with G-Cter in SUMO); alternate). Residue K155 forms a Glycyl lysine isopeptide (Lys-Gly) (interchain with G-Cter in SUMO2); alternate linkage. Glycyl lysine isopeptide (Lys-Gly) (interchain with G-Cter in SUMO2) cross-links involve residues K160 and K166. K174 is covalently cross-linked (Glycyl lysine isopeptide (Lys-Gly) (interchain with G-Cter in SUMO2); alternate). K174 carries the post-translational modification N6-acetyllysine; alternate. Residues 181 to 201 show a composition bias toward basic and acidic residues; that stretch reads KDKDKKVAEPDNKKKKPKKEE. K206 is covalently cross-linked (Glycyl lysine isopeptide (Lys-Gly) (interchain with G-Cter in SUMO2)). K282 carries the N6-acetyllysine modification. Residue K338 forms a Glycyl lysine isopeptide (Lys-Gly) (interchain with G-Cter in SUMO2) linkage. Interaction with DNA stretches follow at residues 427 to 428 and 490 to 495; these read KY and RAGNEK. One can recognise a Topo IB-type catalytic domain in the interval 434 to 767; the sequence is SSRIKGEKDW…IDMTDEDYEF (334 aa). S508 is modified (phosphoserine; by CK2). A Glycyl lysine isopeptide (Lys-Gly) (interchain with G-Cter in SUMO2) cross-link involves residue K551. Residues 587–589 form an interaction with DNA region; that stretch reads TAK. Glycyl lysine isopeptide (Lys-Gly) (interchain with G-Cter in SUMO2) cross-links involve residues K644, K702, and K714. Catalysis depends on Y725, which acts as the O-(3'-phospho-DNA)-tyrosine intermediate.

Belongs to the type IB topoisomerase family. In terms of assembly, monomer. Interacts with ERCC6. Interacts with TPRN; TPRN interacts with a number of DNA damage response proteins, is recruited to sites of DNA damage and may play a role in DNA damage repair. Sumoylated. Lys-119 is the main site of sumoylation. Sumoylation plays a role in partitioning TOP1 between nucleoli and nucleoplasm. Levels are dramatically increased on camptothecin (CPT) treatment. Post-translationally, phosphorylation at Ser-508 by CK2 increases binding to supercoiled DNA and sensitivity to camptothecin.

The protein resides in the nucleus. It is found in the nucleolus. It localises to the nucleoplasm. The enzyme catalyses ATP-independent breakage of single-stranded DNA, followed by passage and rejoining.. In terms of biological role, releases the supercoiling and torsional tension of DNA introduced during the DNA replication and transcription by transiently cleaving and rejoining one strand of the DNA duplex. Introduces a single-strand break via transesterification at a target site in duplex DNA. The scissile phosphodiester is attacked by the catalytic tyrosine of the enzyme, resulting in the formation of a DNA-(3'-phosphotyrosyl)-enzyme intermediate and the expulsion of a 5'-OH DNA strand. The free DNA strand then rotates around the intact phosphodiester bond on the opposing strand, thus removing DNA supercoils. Finally, in the religation step, the DNA 5'-OH attacks the covalent intermediate to expel the active-site tyrosine and restore the DNA phosphodiester backbone. Regulates the alternative splicing of tissue factor (F3) pre-mRNA in endothelial cells. Involved in the circadian transcription of the core circadian clock component BMAL1 by altering the chromatin structure around the ROR response elements (ROREs) on the BMAL1 promoter. The chain is DNA topoisomerase 1 (Top1) from Mus musculus (Mouse).